We begin with the raw amino-acid sequence, 408 residues long: Aminopeptidase T (408 aa).

A divalent metal cation contacts are provided by E250, E316, E340, H345, H376, and D378.

Belongs to the peptidase M29 family. Homodimer. Co(2+) serves as cofactor. Requires Zn(2+) as cofactor. Mg(2+) is required as a cofactor.

Metal-dependent exopeptidase. The sequence is that of Aminopeptidase T from Thermus aquaticus.